The sequence spans 101 residues: Putative pterin-4-alpha-carbinolamine dehydratase (101 aa).

Belongs to the pterin-4-alpha-carbinolamine dehydratase family.

The enzyme catalyses (4aS,6R)-4a-hydroxy-L-erythro-5,6,7,8-tetrahydrobiopterin = (6R)-L-erythro-6,7-dihydrobiopterin + H2O. The sequence is that of Putative pterin-4-alpha-carbinolamine dehydratase from Rhodopseudomonas palustris (strain HaA2).